Consider the following 125-residue polypeptide: Small ribosomal subunit protein uS12m (125 aa).

It belongs to the universal ribosomal protein uS12 family.

The protein localises to the mitochondrion. Its function is as follows. Protein S12 is involved in the translation initiation step. The protein is Small ribosomal subunit protein uS12m (RPS12) of Brassica napus (Rape).